We begin with the raw amino-acid sequence, 530 residues long: Hyccin 2 (530 aa).

Residues Thr30 and Thr306 each carry the phosphothreonine modification. Residues Ser321 and Ser341 each carry the phosphoserine modification. Residues 328–410 (RREGAEGVNG…DSVVRKQYVQ (83 aa)) are disordered. A compositionally biased stretch (polar residues) spans 353–373 (SGASLSSQPIGTKPSSSSQRG). Phosphoserine is present on residues Ser430, Ser442, Ser444, and Ser491. The tract at residues 498–530 (GQAGEGKELLSPGAPLTKQSRSPSFNMQLISQV) is disordered. Positions 514 to 530 (TKQSRSPSFNMQLISQV) are enriched in polar residues.

The protein belongs to the Hyccin family. As to quaternary structure, component of a phosphatidylinositol 4-kinase (PI4K) complex, composed of PI4KA, EFR3 (EFR3A or EFR3B), TTC7 (TTC7A or TTC7B) and HYCC (HYCC1 or HYCC2).

It localises to the cytoplasm. The protein resides in the cytosol. It is found in the cell membrane. Functionally, component of a complex required to localize phosphatidylinositol 4-kinase (PI4K) to the plasma membrane. The polypeptide is Hyccin 2 (HYCC2) (Pongo abelii (Sumatran orangutan)).